Reading from the N-terminus, the 496-residue chain is Galactokinase (496 aa).

Ala-2 is subject to N-acetylalanine. Positions 56, 62, 63, and 65 each coordinate alpha-D-galactose. ATP is bound by residues Gly-161, Gly-163, Ser-165, and Ser-166. Alpha-D-galactose is bound at residue Asp-210. The active-site Proton acceptor is Asp-210. ATP is bound by residues Ser-252, Gln-253, and Lys-254. Tyr-262 serves as a coordination point for alpha-D-galactose.

This sequence belongs to the GHMP kinase family. GalK subfamily. Mg(2+) serves as cofactor. It depends on Mn(2+) as a cofactor. Ca(2+) is required as a cofactor. As to expression, expressed in roots, stems, leaves, flowers and young siliques. Higher expression in the elongating middle stem region than in the lower or upper stem region.

It carries out the reaction alpha-D-galactose + ATP = alpha-D-galactose 1-phosphate + ADP + H(+). Its pathway is carbohydrate metabolism; galactose metabolism. Functionally, sugar-1-kinase with a very high substrate specificity for the alpha-anomeric configuration of D-galacose (D-Gal). Also efficiently converts 2-deoxy-D-Gal to 2-deoxy-D-al-1-phosphate. The sequence is that of Galactokinase (GAL1) from Arabidopsis thaliana (Mouse-ear cress).